Consider the following 965-residue polypeptide: Receptor-like protein 15 (965 aa).

Positions 1 to 23 are cleaved as a signal peptide; it reads MEGKVFLGHNLIWVMLLMGQLHG. Over 24–916 the chain is Extracellular; sequence YKSCIDEEKI…GVEADESIID (893 aa). 4 N-linked (GlcNAc...) asparagine glycosylation sites follow: asparagine 57, asparagine 95, asparagine 109, and asparagine 145. 17 LRR repeats span residues 80-102, 103-127, 131-154, 156-179, 180-204, 206-230, 243-267, 268-290, 292-315, 316-341, 342-365, 366-389, 391-415, 417-435, 437-461, 462-485, and 487-512; these read EISFGGLSLKDNSLLNLSLLHPF, EDVRSLNLSSSRCSGLFDDVEGYKS, LRKLEILDLASNKFNNSIFHFLSA, TSLTTLFLRSNNMDGSFPAKELRD, LTNLELLDLSRNRFNGSIPIQELSS, RKLKALDLSGNEFSGSMELQGKFCT, LNNMQELDLSQNKLVGHLPSCLTSL, TGLRVLDLSSNKLTGTVPSSLGS, QSLEYLSLFDNDFEGSFSFGSLAN, LSNLMVLKLCSKSSSLQVLSESSWKP, KFQLSVIALRSCNMEKVPHFLLHQ, KDLRHVDLSDNNISGKLPSWLLAN, TKLKVLLLQNNLFTSFQIPKSAHNL, FLDVSANDFNHLFPENIGW, FPHLRYLNTSKNNFQENLPSSLGNM, NGIQYMDLSRNSFHGNLPRSFVNG, and YSMAILKLSHNKLSGEIFPESTNFTN. Asparagine 194 carries an N-linked (GlcNAc...) asparagine glycan. The N-linked (GlcNAc...) asparagine glycan is linked to asparagine 315. N-linked (GlcNAc...) asparagine glycans are attached at residues asparagine 377 and asparagine 389. N-linked (GlcNAc...) asparagine glycosylation occurs at asparagine 444. Asparagine 509 is a glycosylation site (N-linked (GlcNAc...) asparagine). The LRR 18; degenerate repeat unit spans residues 514–533; the sequence is LGLFMDNNLFTGKIGQGLRS. LRR repeat units follow at residues 534–557, 558–582, 584–606, 608–627, 628–652, 654–674, 675–698, 778–801, 802–825, 827–850, and 851–875; these read LINLELLDMSNNNLTGVIPSWIGE, LPSLTALLISDNFLKGDIPMSLFNK, SLQLLDLSANSLSGVIPPQHDSR, GVVLLLQDNKLSGTIPDTLL, ANVEILDLRNNRFSGKIPEFINIQN, SILLLRGNNFTGQIPHQLCGL, SNIQLLDLSNNRLNGTIPSCLSNT, LKLLFGMDLSENELSGEIPVEFGG, LLELRALNLSHNNLSGVIPKSISS, EKMESFDLSFNRLQGRIPSQLTEL, and TSLSVFKVSHNNLSGVIPQGRQFNT. Asparagine 546 and asparagine 581 each carry an N-linked (GlcNAc...) asparagine glycan. Residues asparagine 652, asparagine 662, asparagine 688, and asparagine 697 are each glycosylated (N-linked (GlcNAc...) asparagine). N-linked (GlcNAc...) asparagine glycans are attached at residues asparagine 809 and asparagine 814. N-linked (GlcNAc...) asparagine glycans are attached at residues asparagine 862, asparagine 893, and asparagine 898. Residues 917-937 traverse the membrane as a helical segment; it reads MVSFYLSFAAAYVTILIGILA. Residues 938-965 lie on the Cytoplasmic side of the membrane; sequence SLSFDSPWSRFWFYKVDAFIKKVRNLLL.

This sequence belongs to the RLP family.

It localises to the cell membrane. This chain is Receptor-like protein 15, found in Arabidopsis thaliana (Mouse-ear cress).